A 197-amino-acid polypeptide reads, in one-letter code: Putative protein N5-glutamine methyltransferase MJ0928 (197 aa).

Residues 42–46, Asp64, and Asn105 contribute to the S-adenosyl-L-methionine site; that span reads GVGTG. 105–108 serves as a coordination point for substrate; the sequence is NPPY.

The protein belongs to the eukaryotic/archaeal PrmC-related family.

It catalyses the reaction L-glutaminyl-[protein] + S-adenosyl-L-methionine = N(5)-methyl-L-glutaminyl-[protein] + S-adenosyl-L-homocysteine + H(+). Putative protein methyltransferase using S-adenosyl-L-methionine as the methyl donor. May methylate a Gln residue in target proteins. The protein is Putative protein N5-glutamine methyltransferase MJ0928 of Methanocaldococcus jannaschii (strain ATCC 43067 / DSM 2661 / JAL-1 / JCM 10045 / NBRC 100440) (Methanococcus jannaschii).